Consider the following 284-residue polypeptide: Formamidopyrimidine-DNA glycosylase (284 aa).

Catalysis depends on Pro-2, which acts as the Schiff-base intermediate with DNA. The active-site Proton donor is the Glu-3. Lys-58 acts as the Proton donor; for beta-elimination activity in catalysis. Residues His-97, Arg-120, and Arg-165 each contribute to the DNA site. An FPG-type zinc finger spans residues Phe-250–His-284. Arg-274 functions as the Proton donor; for delta-elimination activity in the catalytic mechanism.

Belongs to the FPG family. Monomer. Zn(2+) serves as cofactor.

The catalysed reaction is Hydrolysis of DNA containing ring-opened 7-methylguanine residues, releasing 2,6-diamino-4-hydroxy-5-(N-methyl)formamidopyrimidine.. It catalyses the reaction 2'-deoxyribonucleotide-(2'-deoxyribose 5'-phosphate)-2'-deoxyribonucleotide-DNA = a 3'-end 2'-deoxyribonucleotide-(2,3-dehydro-2,3-deoxyribose 5'-phosphate)-DNA + a 5'-end 5'-phospho-2'-deoxyribonucleoside-DNA + H(+). In terms of biological role, involved in base excision repair of DNA damaged by oxidation or by mutagenic agents. Acts as a DNA glycosylase that recognizes and removes damaged bases. Has a preference for oxidized purines, such as 7,8-dihydro-8-oxoguanine (8-oxoG). Has AP (apurinic/apyrimidinic) lyase activity and introduces nicks in the DNA strand. Cleaves the DNA backbone by beta-delta elimination to generate a single-strand break at the site of the removed base with both 3'- and 5'-phosphates. The polypeptide is Formamidopyrimidine-DNA glycosylase (Cupriavidus pinatubonensis (strain JMP 134 / LMG 1197) (Cupriavidus necator (strain JMP 134))).